We begin with the raw amino-acid sequence, 695 residues long: ATP-dependent zinc metalloprotease FTSH 2, chloroplastic (695 aa).

The transit peptide at 1–47 (MAASSACLVGNGLSVNTTTKQRLSKHFSGRQTSFSSVIRTSKVNVVK) directs the protein to the chloroplast. A thylakoid-targeting transit peptide spans 48–82 (ASLDGKKKQEGRRDFLKILLGNAGVGLVASGKANA). Residues 83-167 (DEQGVSSSRM…AHNAQEDQGS (85 aa)) are Lumenal, thylakoid-facing. A helical transmembrane segment spans residues 168–188 (VLFNLIGNLAFPALLIGGLFL). Residues 189-695 (LSRRSGGGMG…PASAPTPAAV (507 aa)) are Stromal-facing. 267-274 (GPPGTGKT) provides a ligand contact to ATP. Residue His488 participates in Zn(2+) binding. Glu489 is a catalytic residue. Zn(2+) contacts are provided by His492 and Asp566. The tract at residues 673–695 (PPENRVPSSTTTTPASAPTPAAV) is disordered. A compositionally biased stretch (low complexity) spans 679–695 (PSSTTTTPASAPTPAAV).

It in the N-terminal section; belongs to the AAA ATPase family. This sequence in the C-terminal section; belongs to the peptidase M41 family. As to quaternary structure, interacts with CHIP and FTSH5. Heterohexamers with FTSH1, FTSH5 and FTSH8. May also form homooligomers. Zn(2+) serves as cofactor. Post-translationally, the FTSH2 precursor is ubiquitinated by CHIP in the cytoplasm. As to expression, expressed in cotyledons, cauline and rosette leaves, stems, sepals, flovers and siliques. Very low in roots.

It localises to the plastid. The protein localises to the chloroplast thylakoid membrane. Functionally, part of a complex that function as an ATP-dependent zinc metallopeptidase. Involved in the thylakoid formation and in the removal of damaged D1 in the photosystem II, preventing cell death under high-intensity light conditions, but not involved in thermotolerance. The sequence is that of ATP-dependent zinc metalloprotease FTSH 2, chloroplastic (FTSH2) from Arabidopsis thaliana (Mouse-ear cress).